Reading from the N-terminus, the 322-residue chain is Arginase (322 aa).

His113, Asp141, His143, and Asp145 together coordinate Mn(2+). Substrate contacts are provided by residues 143–147, 154–156, and Asp200; these read HADIN and SGN. Positions 247 and 249 each coordinate Mn(2+). 2 residues coordinate substrate: Thr261 and Glu292.

Belongs to the arginase family. Homotrimer. The cofactor is Mn(2+).

The catalysed reaction is L-arginine + H2O = urea + L-ornithine. It participates in nitrogen metabolism; urea cycle; L-ornithine and urea from L-arginine: step 1/1. This is Arginase (ARG) from Coccidioides immitis (strain RS) (Valley fever fungus).